We begin with the raw amino-acid sequence, 621 residues long: Microbial serine proteinase (621 aa).

An N-terminal signal peptide occupies residues 1–24 (MRKTSLALAISALLSALPIASVQA). One can recognise a Peptidase S8 domain in the interval 68-440 (PRGGMAGNDL…FGLVDVNKTQ (373 aa)). Asp-98 acts as the Charge relay system in catalysis. The disordered stretch occupies residues 114-133 (PGSKNVVTGGSDPTPTDPDR). Active-site charge relay system residues include His-137 and Ser-354. The 166-residue stretch at 454–619 (AVALAKGKGN…GYSVLGHDAA (166 aa)) folds into the P/Homo B domain. A disordered region spans residues 457-485 (LAKGKGNGRSPSAPSRYVGSSPTRSSTQV). A compositionally biased stretch (polar residues) spans 465–485 (RSPSAPSRYVGSSPTRSSTQV).

Belongs to the peptidase S8 family.

Agent of furonculosis. The polypeptide is Microbial serine proteinase (aspA) (Aeromonas salmonicida).